The chain runs to 550 residues: Putative golgin subfamily A member 6-like protein 19 (550 aa).

Positions 1–11 are enriched in pro residues; that stretch reads MWPQPRLPPHP. The interval 1–77 is disordered; sequence MWPQPRLPPH…DSATGVYGEG (77 aa). Residues 51-62 show a composition bias toward polar residues; it reads NGSSPDTATSGG. Residues 157-405 adopt a coiled-coil conformation; sequence SKVEQLQDET…QERLRQQDER (249 aa). The span at 467 to 480 shows a compositional bias: basic and acidic residues; the sequence is KELEKSGGAEEPRG. Positions 467 to 529 are disordered; sequence KELEKSGGAE…VGTGEAAGGA (63 aa). Low complexity-rich tracts occupy residues 484–499 and 517–529; these read AAAA…PQGA and GEAV…AGGA.

The protein belongs to the GOLGA6 family.

In Homo sapiens (Human), this protein is Putative golgin subfamily A member 6-like protein 19 (GOLGA6L19).